A 421-amino-acid chain; its full sequence is Inner membrane protein YihN (421 aa).

The Periplasmic portion of the chain corresponds to 1 to 44 (MLTKKKWALFSLLTLCGGTIYKLPSLKDAFYIPMQEYFHLTNGQ). Residues 45–65 (IGNAMSVNSFVTTVGFFLSIY) form a helical membrane-spanning segment. Residues 66-73 (FADKLPRR) lie on the Cytoplasmic side of the membrane. Residues 74-91 (YTMSFSLIATGLLGVYLT) traverse the membrane as a helical segment. At 92–95 (TMPG) the chain is on the periplasmic side. Residues 96-118 (YWGILFVWALFGVTCDMMNWPVL) form a helical membrane-spanning segment. Over 119-146 (LKSVSRLGNSEQQGRLFGFFETGRGIVD) the chain is Cytoplasmic. Residues 147-167 (TVVAFSALAVFTWFGSGLLGF) traverse the membrane as a helical segment. A topological domain (periplasmic) is located at residue K168. Residues 169–189 (AGIWFYSLIVIAVGIIIFFVL) form a helical membrane-spanning segment. Residues 190-220 (NDKEEAPSVEVKKEDGASKNTSMTSVLKDKT) lie on the Cytoplasmic side of the membrane. Helical transmembrane passes span 221-241 (IWLIAFNVFFVYAVYCGLTFF) and 242-262 (IPFLKNIYLLPVALVGAYGII). Over 263–288 (NQYCLKMIGGPIGGMISDKILKSPSK) the chain is Cytoplasmic. A run of 2 helical transmembrane segments spans residues 289–309 (YLCYTFIISTAALVLLIMLPH) and 310–330 (ESMPVYLGMACTLGFGAIVFT). Topologically, residues 331–354 (QRAVFFAPIGEAKIAENKTGAAMA) are cytoplasmic. Residues 355–375 (LGSFIGYAPAMFCFSLYGYIL) traverse the membrane as a helical segment. The Periplasmic portion of the chain corresponds to 376 to 385 (DLNPGIIGYK). Residues 386 to 406 (IVFGIMACFAFSGAVVSVMLV) form a helical membrane-spanning segment. At 407-421 (KRISQRKKEMLAAEA) the chain is on the cytoplasmic side.

It belongs to the major facilitator superfamily.

The protein resides in the cell inner membrane. The chain is Inner membrane protein YihN (yihN) from Escherichia coli (strain K12).